The primary structure comprises 382 residues: tRNA(Met) cytidine acetate ligase (382 aa).

Residues 9-22, glycine 103, asparagine 152, and arginine 177 contribute to the ATP site; that span reads VTEY…HAYQ.

It belongs to the TmcAL family.

The protein resides in the cytoplasm. It catalyses the reaction cytidine(34) in elongator tRNA(Met) + acetate + ATP = N(4)-acetylcytidine(34) in elongator tRNA(Met) + AMP + diphosphate. Its function is as follows. Catalyzes the formation of N(4)-acetylcytidine (ac(4)C) at the wobble position of elongator tRNA(Met), using acetate and ATP as substrates. First activates an acetate ion to form acetyladenylate (Ac-AMP) and then transfers the acetyl group to tRNA to form ac(4)C34. The protein is tRNA(Met) cytidine acetate ligase of Levilactobacillus brevis (strain ATCC 367 / BCRC 12310 / CIP 105137 / JCM 1170 / LMG 11437 / NCIMB 947 / NCTC 947) (Lactobacillus brevis).